We begin with the raw amino-acid sequence, 217 residues long: RING-H2 finger protein ATL70 (217 aa).

A helical membrane pass occupies residues 61 to 81 (IGGFRYGIGVSIGVLLLITTI). An RING-type; atypical zinc finger spans residues 147 to 189 (CAICLGDYKGKHLLRQLPDCNHLFHLKCIDTWLRLNPTCPVCR).

Belongs to the RING-type zinc finger family. ATL subfamily.

It localises to the membrane. It catalyses the reaction S-ubiquitinyl-[E2 ubiquitin-conjugating enzyme]-L-cysteine + [acceptor protein]-L-lysine = [E2 ubiquitin-conjugating enzyme]-L-cysteine + N(6)-ubiquitinyl-[acceptor protein]-L-lysine.. Its pathway is protein modification; protein ubiquitination. This Arabidopsis thaliana (Mouse-ear cress) protein is RING-H2 finger protein ATL70 (ATL70).